Here is a 98-residue protein sequence, read N- to C-terminus: MFEQRVNSDVLTVSTVNSQDQVTQKPLRDSVKQALKNYFAQLNGQDVNDLYELVLAEVEQPLLDMVMQYTRGNQTRAALMMGINRGTLRKKLKKYGMN.

Positions 74–93 (QTRAALMMGINRGTLRKKLK) form a DNA-binding region, H-T-H motif.

Belongs to the transcriptional regulatory Fis family. In terms of assembly, homodimer.

Activates ribosomal RNA transcription. Plays a direct role in upstream activation of rRNA promoters. This is DNA-binding protein Fis from Citrobacter koseri (strain ATCC BAA-895 / CDC 4225-83 / SGSC4696).